A 151-amino-acid chain; its full sequence is Arginine repressor (151 aa).

Belongs to the ArgR family.

The protein resides in the cytoplasm. It participates in amino-acid biosynthesis; L-arginine biosynthesis [regulation]. Its function is as follows. Regulates arginine biosynthesis genes. The polypeptide is Arginine repressor (Lachnospira eligens (strain ATCC 27750 / DSM 3376 / VPI C15-48 / C15-B4) (Eubacterium eligens)).